The sequence spans 152 residues: MTEPLRIAVTQLPHGQGLPLPAYQTEHAAGLDLLAAVPEDKPLAIAPGERALVPTGLAIALPAGYEAQVRPRSGLAVKHGVTVLNAPGTIDADYRGEIGVPLINHGRETFIIRRGERIAQMVVAPVVQIAFEPVAELPMSARGAGGFGSTGR.

Residues Arg72 to Gly74, Asn85, and Thr89 to Asp91 contribute to the substrate site.

The protein belongs to the dUTPase family. It depends on Mg(2+) as a cofactor.

It catalyses the reaction dUTP + H2O = dUMP + diphosphate + H(+). Its pathway is pyrimidine metabolism; dUMP biosynthesis; dUMP from dCTP (dUTP route): step 2/2. In terms of biological role, this enzyme is involved in nucleotide metabolism: it produces dUMP, the immediate precursor of thymidine nucleotides and it decreases the intracellular concentration of dUTP so that uracil cannot be incorporated into DNA. The protein is Deoxyuridine 5'-triphosphate nucleotidohydrolase of Afipia carboxidovorans (strain ATCC 49405 / DSM 1227 / KCTC 32145 / OM5) (Oligotropha carboxidovorans).